The primary structure comprises 2053 residues: Cell adhesion molecule DSCAML1 (2053 aa).

Positions 1-18 (MWLVTFLLLLDSLHKARP) are cleaved as a signal peptide. Ig-like C2-type domains lie at 19–119 (EDVG…NIRV), 115–217 (PNIR…ARLS), 226–306 (PTIL…AEAT), 314–402 (PLHV…AIIA), 408–501 (PRIV…ARIN), 506–586 (PSIR…LSIS), 596–685 (PPLI…RQLI), 690–784 (PRFV…MFLT), and 788–885 (PAMI…LTVQ). Over 19-1591 (EDVGTSLYFV…AQGEGDDVKK (1573 aa)) the chain is Extracellular. Residues asparagine 29 and asparagine 79 are each glycosylated (N-linked (GlcNAc...) asparagine). 5 cysteine pairs are disulfide-bonded: cysteine 47–cysteine 103, cysteine 146–cysteine 198, cysteine 247–cysteine 294, cysteine 336–cysteine 386, and cysteine 429–cysteine 485. Asparagine 368, asparagine 471, asparagine 513, asparagine 556, asparagine 666, asparagine 710, asparagine 749, asparagine 796, and asparagine 809 each carry an N-linked (GlcNAc...) asparagine glycan. Disulfide bonds link cysteine 526/cysteine 575 and cysteine 617/cysteine 669. Cysteine 711 and cysteine 767 are joined by a disulfide. A disulfide bridge connects residues cysteine 810 and cysteine 867. 4 consecutive Fibronectin type-III domains span residues 887-984 (PPDP…TEEA), 989-1088 (PPMD…TLED), 1093-1189 (PPEN…TKED), and 1193-1288 (PPAG…AGKA). N-linked (GlcNAc...) asparagine glycosylation is found at asparagine 926, asparagine 1082, asparagine 1144, asparagine 1162, asparagine 1275, and asparagine 1345. The Ig-like C2-type 10 domain occupies 1278-1377 (EKVTIEPAGK…TGGFDTIIVN (100 aa)). Cysteines 1311 and 1363 form a disulfide. Fibronectin type-III domains are found at residues 1383–1477 (PPDQ…THGR) and 1478–1578 (EPSF…TIPP). N-linked (GlcNAc...) asparagine glycosylation is found at asparagine 1492, asparagine 1531, and asparagine 1561. A helical membrane pass occupies residues 1592 to 1612 (LFTIGCPVILATLGVALLFIV). Topologically, residues 1613–2053 (RKKRKEKRLK…GAYSKSYTLV (441 aa)) are cytoplasmic. 4 disordered regions span residues 1715-1741 (PLID…HSTR), 1773-1803 (HGVT…STES), 1840-1862 (SSDQ…STPS), and 1974-2053 (LAMP…YTLV). A compositionally biased stretch (basic residues) spans 1732–1741 (KNVKSAHSTR). The span at 1773-1789 (HGVTVTESDSYSASLSQ) shows a compositional bias: polar residues. A compositionally biased stretch (pro residues) spans 1977-2009 (PAPPAGTAPPAPGPTPAEPPTAPSAAPPAPSTE). The segment covering 2029–2041 (EMSTSGVGRSQKQ) has biased composition (polar residues).

In terms of assembly, homodimer; mediates homophilic interactions to promote cell adhesion. Detected in heart, liver, pancreas, skeletal muscle, kidney and in brain, in particular in the amygdala, caudate nucleus, corpus callosum, hippocampus, substantia nigra, thalamus and subthalamus.

The protein resides in the cell membrane. It is found in the synapse. Functionally, cell adhesion molecule that plays a role in neuronal self-avoidance. Promotes repulsion between specific neuronal processes of either the same cell or the same subtype of cells. Promotes both isoneuronal self-avoidance for creating an orderly neurite arborization in retinal rod bipolar cells and heteroneuronal self-avoidance to maintain mosaic spacing between AII amacrine cells. Adhesion molecule that promotes lamina-specific synaptic connections in the retina: expressed in specific subsets of interneurons and retinal ganglion cells (RGCs) and promotes synaptic connectivity via homophilic interactions. This chain is Cell adhesion molecule DSCAML1 (DSCAML1), found in Homo sapiens (Human).